The sequence spans 293 residues: Putative ribose uptake protein RbsU (293 aa).

The next 10 helical transmembrane spans lie at 2–24, 34–56, 63–80, 95–117, 122–139, 154–171, 180–202, 212–234, 241–263, and 273–292; these read SIVALLIGLGPLIGWGFFPTVAS, IIGATVGTLIFAIILAVVTSSGF, LFALLSGAGWGFGQIITF, TTAFQLLGASLWGVFALGNWPGI, IGFTALVVILIGARMTVW, AVVLLLIGEFGYWLYSAA, LTAFLPQAMGMVIVAVIYGFMNM, ITWLQIISGFFFAFGALTYLISA, LATGFILSQTSVVLATLTGIYFL, and VITIIGLVLILVAASVTVFI.

The protein belongs to the GRP transporter (TC 2.A.7.5) family.

Its subcellular location is the cell membrane. In terms of biological role, could be involved in the uptake of ribose. The protein is Putative ribose uptake protein RbsU (rbsU) of Staphylococcus aureus (strain Mu50 / ATCC 700699).